Here is a 187-residue protein sequence, read N- to C-terminus: Acetyl-CoA decarbonylase/synthase complex subunit epsilon (187 aa).

Met1 bears the Blocked amino end (Met) mark.

This sequence belongs to the CdhB family. In terms of assembly, heterotetramer of two alpha and two epsilon subunits. The ACDS complex is made up of alpha, epsilon, beta, gamma and delta subunits with a probable stoichiometry of (alpha(2)epsilon(2))(4)-beta(8)-(gamma(1)delta(1))(8).

Functionally, part of a complex that catalyzes the reversible cleavage of acetyl-CoA, allowing autotrophic growth from CO(2). The alpha-epsilon subcomponent functions as a carbon monoxide dehydrogenase. The precise role of the epsilon subunit is unclear; it may have a stabilizing role within the alpha(2)epsilon(2) component and/or be involved in electron transfer to FAD during a potential FAD-mediated CO oxidation. The polypeptide is Acetyl-CoA decarbonylase/synthase complex subunit epsilon (Methanothrix soehngenii (Methanosaeta concilii)).